The chain runs to 508 residues: Light-independent protochlorophyllide reductase subunit B (508 aa).

D36 provides a ligand contact to [4Fe-4S] cluster. The active-site Proton donor is the D294. 429–430 is a binding site for substrate; sequence GM.

This sequence belongs to the ChlB/BchB/BchZ family. As to quaternary structure, protochlorophyllide reductase is composed of three subunits; ChlL, ChlN and ChlB. Forms a heterotetramer of two ChlB and two ChlN subunits. Requires [4Fe-4S] cluster as cofactor.

The catalysed reaction is chlorophyllide a + oxidized 2[4Fe-4S]-[ferredoxin] + 2 ADP + 2 phosphate = protochlorophyllide a + reduced 2[4Fe-4S]-[ferredoxin] + 2 ATP + 2 H2O. It functions in the pathway porphyrin-containing compound metabolism; chlorophyll biosynthesis (light-independent). Component of the dark-operative protochlorophyllide reductase (DPOR) that uses Mg-ATP and reduced ferredoxin to reduce ring D of protochlorophyllide (Pchlide) to form chlorophyllide a (Chlide). This reaction is light-independent. The NB-protein (ChlN-ChlB) is the catalytic component of the complex. This is Light-independent protochlorophyllide reductase subunit B from Trichormus variabilis (strain ATCC 29413 / PCC 7937) (Anabaena variabilis).